A 122-amino-acid polypeptide reads, in one-letter code: Fluoride-specific ion channel FluC (122 aa).

A run of 4 helical transmembrane segments spans residues 6–26 (LVVGFGGFIGAILRMFSINLV), 33–53 (SISLGTLFVNVLGSFIIGLLF), 60–80 (GLSPLLKSFISTGFLGAFTTF), and 101–121 (LNIILNVFLCLFAAWLGFIIF). Gly75 and Thr78 together coordinate Na(+).

Belongs to the fluoride channel Fluc/FEX (TC 1.A.43) family.

It is found in the cell inner membrane. The catalysed reaction is fluoride(in) = fluoride(out). Na(+) is not transported, but it plays an essential structural role and its presence is essential for fluoride channel function. Functionally, fluoride-specific ion channel. Important for reducing fluoride concentration in the cell, thus reducing its toxicity. This chain is Fluoride-specific ion channel FluC, found in Campylobacter jejuni subsp. jejuni serotype O:6 (strain 81116 / NCTC 11828).